The sequence spans 393 residues: Acetate kinase (393 aa).

Asn7 lines the Mg(2+) pocket. Residue Lys14 participates in ATP binding. A substrate-binding site is contributed by Arg90. Catalysis depends on Asp147, which acts as the Proton donor/acceptor. ATP-binding positions include 205-209, 280-282, and 328-332; these read HLGNG, DFR, and GIGEN. Glu380 is a binding site for Mg(2+).

The protein belongs to the acetokinase family. As to quaternary structure, homodimer. The cofactor is Mg(2+). Requires Mn(2+) as cofactor.

It localises to the cytoplasm. The catalysed reaction is acetate + ATP = acetyl phosphate + ADP. It functions in the pathway metabolic intermediate biosynthesis; acetyl-CoA biosynthesis; acetyl-CoA from acetate: step 1/2. Functionally, catalyzes the formation of acetyl phosphate from acetate and ATP. Can also catalyze the reverse reaction. The protein is Acetate kinase of Finegoldia magna (strain ATCC 29328 / DSM 20472 / WAL 2508) (Peptostreptococcus magnus).